We begin with the raw amino-acid sequence, 278 residues long: F-box only protein 17 (278 aa).

Residues 15–62 (SLALDALPPELLVQVLSHVPPRSLVTRCRPVCRAWRDIVDGPTVWLLQ) enclose the F-box domain. The region spanning 99-275 (YCLRAPFGRN…VTHSSVRVRI (177 aa)) is the FBA domain.

As to quaternary structure, part of a SCF (SKP1-cullin-F-box) protein ligase complex. Interacts with SKP1 and CUL1. In terms of tissue distribution, expressed in heart, skeletal muscle, liver and kidney. Expressed at lower levels in spleen and brain.

Substrate-recognition component of the SCF (SKP1-CUL1-F-box protein)-type E3 ubiquitin ligase complex. Able to recognize and bind denatured glycoproteins, which are modified with complex-type oligosaccharides. Also recognizes sulfated glycans. Does not bind high-mannose glycoproteins. This Homo sapiens (Human) protein is F-box only protein 17 (FBXO17).